We begin with the raw amino-acid sequence, 294 residues long: MASKITAAQVKELRDKTQVGMMDAKKALVASEGDMDKAIDFLREKGIAKAKKKSGNVAANGLARVKEDGNTAAIIEVNSETDFVATNDTFNALVDTIADTIAEKQPADLDAALALTTADGSTINDAIVKTTQVTSENVQLRRFAVVKKTDGQVFGSYLHQGGQIAAVVVLDGADEATAKDVAMHVAAINPEFVSRDDIPAERLDHEREVLKQEALNEGKPEKIVEKMVEGRLHKFLSEISLADQPFVKDGDQTVSQFVASKGGKLVTFVRYEVGEGIEKPVADLAKEVQDQING.

Residues 81-84 form an involved in Mg(2+) ion dislocation from EF-Tu region; the sequence is TDFV.

This sequence belongs to the EF-Ts family.

It is found in the cytoplasm. Its function is as follows. Associates with the EF-Tu.GDP complex and induces the exchange of GDP to GTP. It remains bound to the aminoacyl-tRNA.EF-Tu.GTP complex up to the GTP hydrolysis stage on the ribosome. The protein is Elongation factor Ts of Levilactobacillus brevis (strain ATCC 367 / BCRC 12310 / CIP 105137 / JCM 1170 / LMG 11437 / NCIMB 947 / NCTC 947) (Lactobacillus brevis).